We begin with the raw amino-acid sequence, 736 residues long: Probable beta-glucosidase L (736 aa).

Positions 1-21 are cleaved as a signal peptide; the sequence is MNYRVPSLKATALAMAALTQA. An N-linked (GlcNAc...) asparagine glycan is attached at Asn-224. Asp-252 is a catalytic residue. N-linked (GlcNAc...) asparagine glycosylation is found at Asn-295, Asn-363, Asn-429, and Asn-607.

This sequence belongs to the glycosyl hydrolase 3 family.

The protein resides in the secreted. It catalyses the reaction Hydrolysis of terminal, non-reducing beta-D-glucosyl residues with release of beta-D-glucose.. Its pathway is glycan metabolism; cellulose degradation. In terms of biological role, beta-glucosidases are one of a number of cellulolytic enzymes involved in the degradation of cellulosic biomass. Catalyzes the last step releasing glucose from the inhibitory cellobiose. This is Probable beta-glucosidase L (bglL) from Aspergillus terreus (strain NIH 2624 / FGSC A1156).